The following is a 749-amino-acid chain: Triacylglycerol lipase 5 (749 aa).

Residues 54 to 59 (HAISYD) carry the HXXXXD acyltransferase motif motif. The region spanning 183 to 388 (LVLSGGSTFG…DNDMPISRLS (206 aa)) is the PNPLA domain. The GXSXG motif lies at 214–218 (GSSAG). The Nucleophile role is filled by Ser216. N-linked (GlcNAc...) asparagine glycans are attached at residues Asn270, Asn289, Asn297, Asn304, and Asn321. Asp375 acts as the Proton acceptor in catalysis. N-linked (GlcNAc...) asparagine glycans are attached at residues Asn474 and Asn589. Positions 585–643 (IKSPNKTAAPGRFPLQPLPSPSSTFNKRKMDMLSPSPSPSTSPQRSKSSFTQQGTRQKA) are disordered. Over residues 623 to 633 (PSTSPQRSKSS) the composition is skewed to low complexity. Polar residues predominate over residues 634 to 643 (FTQQGTRQKA). Ser645 carries the post-translational modification Phosphoserine. N-linked (GlcNAc...) asparagine glycans are attached at residues Asn680, Asn714, and Asn742.

It is found in the lipid droplet. It carries out the reaction a triacylglycerol + H2O = a diacylglycerol + a fatty acid + H(+). The catalysed reaction is 1-(9Z-octadecenoyl)-sn-glycero-3-phosphate + (9Z)-octadecenoyl-CoA = 1,2-di-(9Z-octadecenoyl)-sn-glycero-3-phosphate + CoA. It catalyses the reaction 1-(9Z-octadecenoyl)-sn-glycero-3-phosphate + hexadecanoyl-CoA = 1-hexadecanoyl-2-(9Z-octadecenoyl)-sn-glycero-3-phosphate + CoA. Its activity is regulated as follows. Loses its lipolytic activity in cells lacking nonpolar lipids, but retains its side activity as lysophospholipid acyltransferase. In terms of biological role, lipid particle-localized triacylglycerol (TAG) lipase. The lipid droplet/particle is a lipid storage compartment which serves as a depot of energy and building blocks for membrane lipid biosynthesis. Involved in the mobilization of the non-polar storage lipids triacylglycerols (TAGs) from lipid particles by hydrolysis of TAGs, releasing and supplying specific fatty acids to the appropriate metabolic pathways. Also catalyzes the acylation of lysophosphatidic acid (LPA). The polypeptide is Triacylglycerol lipase 5 (TGL5) (Saccharomyces cerevisiae (strain ATCC 204508 / S288c) (Baker's yeast)).